A 224-amino-acid polypeptide reads, in one-letter code: Orotidine 5'-phosphate decarboxylase (224 aa).

Residues Asp10, Lys32, 59–68 (DLKLHDIPNT), Thr115, Arg175, Gln184, Gly204, and Arg205 contribute to the substrate site. The active-site Proton donor is the Lys61.

This sequence belongs to the OMP decarboxylase family. Type 1 subfamily. As to quaternary structure, homodimer.

The catalysed reaction is orotidine 5'-phosphate + H(+) = UMP + CO2. It participates in pyrimidine metabolism; UMP biosynthesis via de novo pathway; UMP from orotate: step 2/2. Catalyzes the decarboxylation of orotidine 5'-monophosphate (OMP) to uridine 5'-monophosphate (UMP). The polypeptide is Orotidine 5'-phosphate decarboxylase (Erythrobacter litoralis (strain HTCC2594)).